The primary structure comprises 433 residues: Schlafen-like protein 2 (433 aa).

The 168-residue stretch at 1 to 168 (MADTSPRESK…LSVNFGSQPF (168 aa)) folds into the B30.2/SPRY domain. The segment at 199–400 (EHVVVKLPFA…RRMASNKCVY (202 aa)) is SLFN-like fold. Active-site residues include E211 and E216.

The protein belongs to the Schlafen family. Component of the trimeric PUCH (precursor of 21U RNA 5'-end cleavage holoenzyme) complex; consisting of tofu-1, tofu-2 and either slfl-3 or slfl-4. Within the complex, interacts (via N-terminus) with tofu-1 (via N-terminus); the interaction stabilizes tofu-2 and may form a functional nuclease. Within the complex, interacts (via N-terminus) with slfl-3 (via N-terminus); the presence of tofu-1 is required for this interaction. The cofactor is Mg(2+). As to expression, expressed in the germline.

The protein resides in the cytoplasm. Its subcellular location is the mitochondrion. With respect to regulation, inhibited by ethylenediaminetetraacetic acid (EDTA). Its function is as follows. Component of the trimeric PUCH (precursor of 21U RNA 5'-end cleavage holoenzyme) complex, that acts as an endoribonuclease processing the 5'-end of precursor Piwi-interacting RNAs (piRNAs). The PUCH complex consists of tofu-1, tofu-2 and either slfl-3 or slfl-4, with tofu-2 exhibiting endoribonuclease activity. PUCH-mediated processing strictly requires a 7-methyl-G cap (m7 G-cap) and an uracil at position three (U3). PUCH also exhibits a strict bias for piRNA precursors with an A or G at position 1. Mature piRNA production is enhanced by the interaction of PUCH with the PETISCO complex, which is stabilizing piRNA precursors and allows their processing by PUCH. This is Schlafen-like protein 2 from Caenorhabditis elegans.